Here is a 107-residue protein sequence, read N- to C-terminus: Prokineticin-2 (107 aa).

The signal sequence occupies residues 1-26; the sequence is MEDPRCAPLLLLLLLPLLLTPPAGDA. 5 disulfide bridges follow: C33–C45, C39–C57, C44–C85, C67–C93, and C87–C103.

This sequence belongs to the AVIT (prokineticin) family. In terms of tissue distribution, expressed at high levels in testis and at lower levels in brain, lung, ovary, spleen, thymus and uterus.

It localises to the secreted. In terms of biological role, may function as an output molecule from the suprachiasmatic nucleus (SCN) that transmits behavioral circadian rhythm. May also function locally within the SCN to synchronize output. Potently contracts gastrointestinal (GI) smooth muscle. In Rattus norvegicus (Rat), this protein is Prokineticin-2 (Prok2).